The following is a 238-amino-acid chain: Ribonuclease PH (238 aa).

Phosphate-binding positions include Arg-86 and 124–126; that span reads GTR.

The protein belongs to the RNase PH family. In terms of assembly, homohexameric ring arranged as a trimer of dimers.

It carries out the reaction tRNA(n+1) + phosphate = tRNA(n) + a ribonucleoside 5'-diphosphate. Functionally, phosphorolytic 3'-5' exoribonuclease that plays an important role in tRNA 3'-end maturation. Removes nucleotide residues following the 3'-CCA terminus of tRNAs; can also add nucleotides to the ends of RNA molecules by using nucleoside diphosphates as substrates, but this may not be physiologically important. Probably plays a role in initiation of 16S rRNA degradation (leading to ribosome degradation) during starvation. The chain is Ribonuclease PH from Geotalea uraniireducens (strain Rf4) (Geobacter uraniireducens).